The chain runs to 776 residues: Venom dipeptidyl peptidase 4 (776 aa).

An N-terminal signal peptide occupies residues 1 to 25; it reads MVPLRSFVLLNSLFLVLLAARTVVT. Asparagine 44, asparagine 66, and asparagine 329 each carry an N-linked (GlcNAc...) asparagine glycan. Disulfide bonds link cysteine 449-cysteine 452 and cysteine 462-cysteine 480. Residues asparagine 504 and asparagine 577 are each glycosylated (N-linked (GlcNAc...) asparagine). Serine 638 serves as the catalytic Charge relay system. Cysteine 658 and cysteine 769 form a disulfide bridge. N-linked (GlcNAc...) asparagine glycans are attached at residues asparagine 688 and asparagine 693. Catalysis depends on charge relay system residues aspartate 717 and histidine 749.

It belongs to the peptidase S9B family. DPPIV subfamily. In terms of tissue distribution, expressed by the venom gland.

It localises to the secreted. It catalyses the reaction Release of an N-terminal dipeptide, Xaa-Yaa-|-Zaa-, from a polypeptide, preferentially when Yaa is Pro, provided Zaa is neither Pro nor hydroxyproline.. With respect to regulation, inhibited by diprotin A. Venom dipeptidyl-peptidase which removes N-terminal dipeptides sequentially from polypeptides having unsubstituted N-termini provided that the penultimate residue is proline. May process venom proteins into their active forms and/or modulate the chemotactic activity of immune cells after the insect sting. The chain is Venom dipeptidyl peptidase 4 from Vespula vulgaris (Yellow jacket).